Consider the following 497-residue polypeptide: Argininosuccinate lyase (497 aa).

This sequence belongs to the lyase 1 family. Argininosuccinate lyase subfamily.

It localises to the cytoplasm. It catalyses the reaction 2-(N(omega)-L-arginino)succinate = fumarate + L-arginine. The protein operates within amino-acid biosynthesis; L-arginine biosynthesis; L-arginine from L-ornithine and carbamoyl phosphate: step 3/3. This chain is Argininosuccinate lyase, found in Clavibacter michiganensis subsp. michiganensis (strain NCPPB 382).